We begin with the raw amino-acid sequence, 205 residues long: Photosystem I assembly protein Ycf4 (205 aa).

The next 2 helical transmembrane spans lie at 23–43 (WATV…SSYI) and 86–106 (LMCF…CLIF).

It belongs to the Ycf4 family.

Its subcellular location is the plastid. The protein localises to the chloroplast thylakoid membrane. Functionally, seems to be required for the assembly of the photosystem I complex. The polypeptide is Photosystem I assembly protein Ycf4 (Tetradesmus obliquus (Green alga)).